We begin with the raw amino-acid sequence, 542 residues long: Retron Ec83 probable ATPase (542 aa).

An ATP-binding motif is present at residues 92-99 (GNNGCGKS).

Probable ATPase component of antiviral defense system retron Ec83, composed of a non-coding RNA (ncRNA), a reverse transcriptase (RT), this protein and a putative HNH endonuclease. Expression of retron Ec83 confers protection against bacteriophage T2, T4 and T6. At multiplicity of infection (MOI) of 0.02 cultures slow growth when infected with T4 but do not collapse, at MOI 2 cultures enter growth stasis. This is Retron Ec83 probable ATPase from Escherichia coli.